The chain runs to 75 residues: Protein SlyX homolog (75 aa).

Belongs to the SlyX family.

This Vibrio vulnificus (strain CMCP6) protein is Protein SlyX homolog.